The following is a 440-amino-acid chain: Xaa-Pro dipeptidase (440 aa).

Residues Asp-241, Asp-252, His-333, Glu-378, and Glu-417 each contribute to the Mn(2+) site.

This sequence belongs to the peptidase M24B family. Bacterial-type prolidase subfamily. It depends on Mn(2+) as a cofactor.

It catalyses the reaction Xaa-L-Pro dipeptide + H2O = an L-alpha-amino acid + L-proline. Its function is as follows. Splits dipeptides with a prolyl residue in the C-terminal position. This chain is Xaa-Pro dipeptidase, found in Glaesserella parasuis serovar 5 (strain SH0165) (Haemophilus parasuis).